Reading from the N-terminus, the 504-residue chain is Maturase K (504 aa).

This sequence belongs to the intron maturase 2 family. MatK subfamily.

Its subcellular location is the plastid. The protein localises to the chloroplast. Functionally, usually encoded in the trnK tRNA gene intron. Probably assists in splicing its own and other chloroplast group II introns. In Olimarabidopsis pumila (Dwarf rocket), this protein is Maturase K.